The following is a 436-amino-acid chain: UDP-N-acetylmuramate--L-alanine ligase (436 aa).

108–114 provides a ligand contact to ATP; it reads GAHGKTS.

This sequence belongs to the MurCDEF family.

The protein resides in the cytoplasm. It catalyses the reaction UDP-N-acetyl-alpha-D-muramate + L-alanine + ATP = UDP-N-acetyl-alpha-D-muramoyl-L-alanine + ADP + phosphate + H(+). Its pathway is cell wall biogenesis; peptidoglycan biosynthesis. Functionally, cell wall formation. This is UDP-N-acetylmuramate--L-alanine ligase from Bacillus cereus (strain G9842).